Reading from the N-terminus, the 458-residue chain is MPWSVLEALRNNPELLIESMKKRCKDPQPVYEAIRVDEEWRKTLQEVERLRHEHNKITREVAKAKDKAEREALIKKAKELLALKEELEKKLKELEAKREEILLSLPNLVHPSVPEGCDEDHNVPVRFWGKPKVWKGHLEEFEKQTKRWGFEVEHEVVEEKPVGHADMLEKVLRLGNTYKAAQVASSRFYYLFKDLVWLDYALMMYAMDFLSKKGFVLVEPPYMVRYKVLRGVIDVETFKDAIYKIEGEDLYLIATSEHPLAAYKMEEIIDESELPIKLAGVSPCFRKEAGAGNRDLKGIFRVHQFHKVEQFVFSKPEDSWEVLEELIRNAEELVKGLELPYRVVNVCGGELGSPAAKKYDLEVWYPAQGKYRELVSASNCTDWQSYRLKIRYRIKGGKKHDFVHTLNSTALATTRTITAILENHQLPDGRVRIPRALRKYLEPFESAPKDYIEPWTGI.

Position 255–257 (Thr255–Glu257) interacts with L-serine. ATP contacts are provided by residues Arg286–Glu288 and Val302. Glu309 lines the L-serine pocket. An ATP-binding site is contributed by Glu373–Ser376. Thr409 lines the L-serine pocket.

This sequence belongs to the class-II aminoacyl-tRNA synthetase family. Type-1 seryl-tRNA synthetase subfamily. Homodimer. The tRNA molecule binds across the dimer.

The protein localises to the cytoplasm. It catalyses the reaction tRNA(Ser) + L-serine + ATP = L-seryl-tRNA(Ser) + AMP + diphosphate + H(+). The catalysed reaction is tRNA(Sec) + L-serine + ATP = L-seryl-tRNA(Sec) + AMP + diphosphate + H(+). It functions in the pathway aminoacyl-tRNA biosynthesis; selenocysteinyl-tRNA(Sec) biosynthesis; L-seryl-tRNA(Sec) from L-serine and tRNA(Sec): step 1/1. Catalyzes the attachment of serine to tRNA(Ser). Is also able to aminoacylate tRNA(Sec) with serine, to form the misacylated tRNA L-seryl-tRNA(Sec), which will be further converted into selenocysteinyl-tRNA(Sec). This chain is Serine--tRNA ligase, found in Ignicoccus hospitalis (strain KIN4/I / DSM 18386 / JCM 14125).